We begin with the raw amino-acid sequence, 28 residues long: Chaperonin GroEL (28 aa).

Belongs to the chaperonin (HSP60) family. In terms of assembly, forms a cylinder of 14 subunits composed of two heptameric rings stacked back-to-back. Interacts with the co-chaperonin GroES.

It is found in the cytoplasm. It carries out the reaction ATP + H2O + a folded polypeptide = ADP + phosphate + an unfolded polypeptide.. Its function is as follows. Together with its co-chaperonin GroES, plays an essential role in assisting protein folding. The GroEL-GroES system forms a nano-cage that allows encapsulation of the non-native substrate proteins and provides a physical environment optimized to promote and accelerate protein folding. The protein is Chaperonin GroEL of Mycolicibacterium smegmatis (Mycobacterium smegmatis).